The following is an 84-amino-acid chain: Putative membrane protein insertion efficiency factor (84 aa).

The tract at residues 63 to 84 (GEDPVPNHFTLRRNKKEKPSKS) is disordered.

The protein belongs to the UPF0161 family.

It is found in the cell membrane. In terms of biological role, could be involved in insertion of integral membrane proteins into the membrane. The chain is Putative membrane protein insertion efficiency factor from Streptococcus mutans serotype c (strain ATCC 700610 / UA159).